A 311-amino-acid chain; its full sequence is Cadmium, cobalt and zinc/H(+)-K(+) antiporter (311 aa).

The Extracellular segment spans residues 1-12 (MGHNHNEGANKK). The chain crosses the membrane as a helical span at residues 13-33 (VLLISFIMITGYMIIEAIGGF). Residues 34 to 43 (LTNSLALLSD) lie on the Cytoplasmic side of the membrane. The helical transmembrane segment at 44 to 64 (AGHMLSDSISLMVALIAFTLA) threads the bilayer. Residues 65–78 (EKKANHNKTFGYKR) are Extracellular-facing. Residues 79–99 (FEILAAVINGAALILISLYII) traverse the membrane as a helical segment. The Cytoplasmic segment spans residues 100-115 (YEAIERFSNPPKVATT). Residues 116-136 (GMLTISIIGLVVNLLVAWIMM) form a helical membrane-spanning segment. Over 137 to 157 (SGGDTKNNLNIRGAYLHVISD) the chain is Extracellular. Residues 158–178 (MLGSVGAILAAILIIFFGWGW) traverse the membrane as a helical segment. The Cytoplasmic segment spans residues 179–311 (ADPLASIIVA…MEKQRDHHHH (133 aa)).

This sequence belongs to the cation diffusion facilitator (CDF) transporter (TC 2.A.4) family. SLC30A subfamily.

The protein resides in the cell membrane. In terms of biological role, involved in divalent cation and potassium homeostasis in the cell. Catalyzes the active efflux of zinc, cadmium and cobalt, in exchange for potassium and H(+) ions. The protein is Cadmium, cobalt and zinc/H(+)-K(+) antiporter (czcD) of Bacillus subtilis (strain 168).